The following is a 644-amino-acid chain: Large subunit GTPase 1 homolog (644 aa).

The interval Met1–Asp31 is disordered. Phosphoserine occurs at positions 93 and 97. Residues Trp164 to Pro430 enclose the CP-type G domain. A GTP-binding site is contributed by Asn212–Asp215. Positions Lys253–Asn345 are disordered. The segment covering Cys302–Cys326 has biased composition (acidic residues). GTP-binding positions include Gly379–Ser386 and Asp423–Gly426. Residues Val618 to Val644 are disordered. Residues Pro622–Val644 are compositionally biased toward basic residues.

Belongs to the TRAFAC class YlqF/YawG GTPase family. LSG1 subfamily.

It is found in the cytoplasm. It localises to the endoplasmic reticulum. The protein resides in the nucleus. The protein localises to the cajal body. It carries out the reaction GTP + H2O = GDP + phosphate + H(+). In terms of biological role, functions as a GTPase. May act by mediating the release of NMD3 from the 60S ribosomal subunit after export into the cytoplasm during the 60S ribosomal subunit maturation. This is Large subunit GTPase 1 homolog from Mus musculus (Mouse).